The following is a 403-amino-acid chain: Phosphopentomutase (403 aa).

Mn(2+) is bound by residues D13, D298, H303, D339, H340, and H351.

This sequence belongs to the phosphopentomutase family. The cofactor is Mn(2+).

The protein localises to the cytoplasm. It carries out the reaction 2-deoxy-alpha-D-ribose 1-phosphate = 2-deoxy-D-ribose 5-phosphate. It catalyses the reaction alpha-D-ribose 1-phosphate = D-ribose 5-phosphate. It participates in carbohydrate degradation; 2-deoxy-D-ribose 1-phosphate degradation; D-glyceraldehyde 3-phosphate and acetaldehyde from 2-deoxy-alpha-D-ribose 1-phosphate: step 1/2. Its function is as follows. Isomerase that catalyzes the conversion of deoxy-ribose 1-phosphate (dRib-1-P) and ribose 1-phosphate (Rib-1-P) to deoxy-ribose 5-phosphate (dRib-5-P) and ribose 5-phosphate (Rib-5-P), respectively. The polypeptide is Phosphopentomutase (Streptococcus pneumoniae serotype 19F (strain G54)).